The chain runs to 462 residues: UDP-N-acetylmuramate--L-alanine ligase (462 aa).

Gly-114–Thr-120 is an ATP binding site.

This sequence belongs to the MurCDEF family.

It localises to the cytoplasm. It carries out the reaction UDP-N-acetyl-alpha-D-muramate + L-alanine + ATP = UDP-N-acetyl-alpha-D-muramoyl-L-alanine + ADP + phosphate + H(+). It functions in the pathway cell wall biogenesis; peptidoglycan biosynthesis. Functionally, cell wall formation. In Brachyspira hyodysenteriae (strain ATCC 49526 / WA1), this protein is UDP-N-acetylmuramate--L-alanine ligase.